A 793-amino-acid polypeptide reads, in one-letter code: Phenylalanine--tRNA ligase beta subunit (793 aa).

In terms of domain architecture, tRNA-binding spans 40 to 159 (SKLNTKLVIG…MDEMVGREIS (120 aa)). Residues 401 to 476 (NYDNVYSITL…RLYGYDNIIE (76 aa)) form the B5 domain. The Mg(2+) site is built by Asp-454, Asp-460, Glu-463, and Glu-464. An FDX-ACB domain is found at 701 to 793 (SKFQKSTRDI…NLKELKVKVR (93 aa)).

The protein belongs to the phenylalanyl-tRNA synthetase beta subunit family. Type 1 subfamily. In terms of assembly, tetramer of two alpha and two beta subunits. Mg(2+) serves as cofactor.

The protein resides in the cytoplasm. The catalysed reaction is tRNA(Phe) + L-phenylalanine + ATP = L-phenylalanyl-tRNA(Phe) + AMP + diphosphate + H(+). The chain is Phenylalanine--tRNA ligase beta subunit from Mesoplasma florum (strain ATCC 33453 / NBRC 100688 / NCTC 11704 / L1) (Acholeplasma florum).